Consider the following 238-residue polypeptide: MAADGQCSLPASWRPVTLTHVEYPAGDLSGHLLAYLSLSPVVIIVGFVTLIIFKRELHTISFLGGLVLNEGVNWLIKHVIQEPRPCGGPHPTVGTKYGMPSSHSQFMWFFSVYSFLFLYLRMHQTNNARFLDLLWRHVLSLGLLTAAFLVSYSRVYLLYHTWSQVLYGGVAGSLMAIAWFAFTQEVLTPLFPRIAAWPISEFFLIRDTSLIPNVLWFEYTVTRAEARNRQRKLGTKLQ.

4 helical membrane passes run 33-53, 100-120, 130-150, and 162-182; these read LAYL…LIIF, PSSH…FLYL, FLDL…AFLV, and WSQV…WFAF.

It belongs to the dolichyldiphosphatase family.

It localises to the endoplasmic reticulum membrane. It catalyses the reaction a di-trans,poly-cis-dolichyl diphosphate + H2O = a di-trans,poly-cis-dolichyl phosphate + phosphate + H(+). It participates in protein modification; protein glycosylation. In terms of biological role, required for efficient N-glycosylation. Necessary for maintaining optimal levels of dolichol-linked oligosaccharides. Hydrolyzes dolichyl pyrophosphate at a very high rate and dolichyl monophosphate at a much lower rate. Does not act on phosphatidate. The sequence is that of Dolichyldiphosphatase 1 (DOLPP1) from Rhinolophus ferrumequinum (Greater horseshoe bat).